Consider the following 840-residue polypeptide: MASPMEAVARSSLVLAPRRRRALGLLPAAAAPFVLDCRRRHNGGMRRPHVSFACSAELDTGRRQLPSTGTRAVMSSCPGYVEGRMVGENTSQINMGREARIRRHLENPEFLPSSYDIAWVAMVPLPGTDHLQAPCFPECVEWILQNQHSNGSWGVNEFDSSASKDILLSTLACIIALEKWNVGSEQIRRGLHFIAKNFSIVIDDQIAAPIGFNLTFPAMVNLAIKMGLEFPASEISIDQILHLRDMELKRLSGEESLGKEAYFAYIAEGLEESMVDWSEVMKFQGKNGSLFNSPAATAAALVHRYDDKALGYLYSVVNKFGGEVPTVYPLNIFSQLSMVDTLVNIGISRHFSSDIKRILDKTYILWSQRDEEVMLDLPTCAMAFRLLRMNGYGVSSDDLSHVAEASTFHNSVEGYLDDTKSLLELYKASKVSLSENEPILEKMGCWSGSLLKEKLCSDDIRGTPILGEVEYALKFPFYATLEPLDHKWNIENFDARAYQKIKTKNMPCHVNEDLLALAAEDFSFCQSTYQNEIQHLESWEKENKLDQLEFTRKNLINSYLSAAATISPYELSDARIACAKSIALTLVADDFFDVGSSKEEQENLISLVEKWDQYHKVEFYSENVKAVFFALYSTVNQLGAMASAVQNRDVTKYNVESWLDYLRSLATDAEWQRSKYVPTMEEYMKNSIVTFALGPTILIALYFMGQNLWEDIVKNAEYDELFRLMNTCGRLQNDIQSFERECKDGKLNSVSLLVLDSKDVMSVEEAKEAINESISSCRRELLRLVVREDGVIPKSCKEMFWNLYKTSHVFYSQADGFSSPKEMMGAMNGVIFEPLKTRGN.

The transit peptide at methionine 1–alanine 56 directs the protein to the chloroplast. Mg(2+) contacts are provided by aspartate 589, aspartate 593, asparagine 733, serine 737, and glutamate 741. The DDXXD motif motif lies at aspartate 589–aspartate 593.

The protein belongs to the terpene synthase family. Requires Mg(2+) as cofactor.

It localises to the plastid. The protein localises to the chloroplast. The catalysed reaction is 9alpha-copalyl diphosphate = 9beta-pimara-7,15-diene + diphosphate. Involved in the biosynthesis of momilactone A and B phytoalexins. Catalyzes the conversion of syn-copalyl diphosphate to the phytoalexin precursor syn-pimara-7,15-diene. The protein is 9-beta-pimara-7,15-diene synthase, chloroplastic of Oryza sativa subsp. indica (Rice).